Reading from the N-terminus, the 63-residue chain is Lantipeptide Flvbeta.a (63 aa).

The propeptide at 1-28 (MSEKNMEKAGVVKADELDEMIDETTGGA) is cleaved by FlvT. 2,3-didehydrobutyrine; by FlvM2 is present on residues threonine 30, threonine 33, threonine 38, and threonine 39. Positions 43 to 49 (SKGLQNC) form a cross-link, lanthionine (Ser-Cys); by FlvM2. 2,3-didehydrobutyrine; by FlvM2 is present on residues threonine 54 and threonine 55.

In terms of processing, maturation of FlvA2 peptides involves the enzymatic conversion of Thr, and Ser into dehydrated AA and the formation of thioether bonds with cysteines. Modifications are processed by the flavecin synthetase FlvM2. This is followed by membrane translocation and cleavage of the modified precursor. Contains DL-lanthionine, when coepressed in E.coli with the flavecin synthetase FlvM2.

Its subcellular location is the secreted. In terms of biological role, lanthionine-containing peptide that does probably not show antibacterial activity, since its analog [+3]Flvbeta.a does not show antibacterial activity against M.luteus. Also does not show antibiotic activity when tested with [Del2]Flvalpha.a, an analog of Flvalpha.a, which is encoded by the same operon than Flvbeta.a. The bactericidal activity of lantibiotics is based on depolarization of energized bacterial cytoplasmic membranes, initiated by the formation of aqueous transmembrane pores. The sequence is that of Lantipeptide Flvbeta.a from Ruminococcus flavefaciens.